The sequence spans 299 residues: Ribosomal RNA small subunit methyltransferase H (299 aa).

Residues 36–38 (GGH), Asp55, Phe82, Asp97, and Gln104 each bind S-adenosyl-L-methionine.

This sequence belongs to the methyltransferase superfamily. RsmH family.

The protein localises to the cytoplasm. The enzyme catalyses cytidine(1402) in 16S rRNA + S-adenosyl-L-methionine = N(4)-methylcytidine(1402) in 16S rRNA + S-adenosyl-L-homocysteine + H(+). Functionally, specifically methylates the N4 position of cytidine in position 1402 (C1402) of 16S rRNA. In Synechococcus sp. (strain RCC307), this protein is Ribosomal RNA small subunit methyltransferase H.